The sequence spans 566 residues: Putative ankyrin repeat protein RF_0987 (566 aa).

Disordered regions lie at residues 61 to 118, 276 to 314, and 355 to 392; these read KKKN…HENS, PPVM…SAEI, and VNNN…SEST. Over residues 78–92 the composition is skewed to basic and acidic residues; it reads NQEEPKLASQEHTEA. A compositionally biased stretch (polar residues) spans 101 to 112; the sequence is TGNTALPSVTAS. Residues 296–308 show a composition bias toward low complexity; that stretch reads TPVTTPSKVVPTT. Residues 365-378 show a composition bias toward polar residues; the sequence is EKSPPVSSSNVTIQ. 2 ANK repeats span residues 506–535 and 539–566; these read SGET…KIST and ECQY…KGYQ.

The chain is Putative ankyrin repeat protein RF_0987 from Rickettsia felis (strain ATCC VR-1525 / URRWXCal2) (Rickettsia azadi).